A 500-amino-acid chain; its full sequence is Probable malate:quinone oxidoreductase (500 aa).

Belongs to the MQO family. FAD is required as a cofactor.

The enzyme catalyses (S)-malate + a quinone = a quinol + oxaloacetate. Its pathway is carbohydrate metabolism; tricarboxylic acid cycle; oxaloacetate from (S)-malate (quinone route): step 1/1. The chain is Probable malate:quinone oxidoreductase from Corynebacterium glutamicum (strain R).